Here is a 235-residue protein sequence, read N- to C-terminus: Small ribosomal subunit protein eS4 (235 aa).

Positions 38 to 99 constitute an S4 RNA-binding domain; sequence VTLLSIIRDY…GESYRVVYND (62 aa).

It belongs to the eukaryotic ribosomal protein eS4 family.

This is Small ribosomal subunit protein eS4 (rps4e) from Thermoplasma acidophilum (strain ATCC 25905 / DSM 1728 / JCM 9062 / NBRC 15155 / AMRC-C165).